We begin with the raw amino-acid sequence, 92 residues long: Elongation factor 1-beta (92 aa).

It belongs to the EF-1-beta/EF-1-delta family.

Promotes the exchange of GDP for GTP in EF-1-alpha/GDP, thus allowing the regeneration of EF-1-alpha/GTP that could then be used to form the ternary complex EF-1-alpha/GTP/AAtRNA. In Pyrobaculum neutrophilum (strain DSM 2338 / JCM 9278 / NBRC 100436 / V24Sta) (Thermoproteus neutrophilus), this protein is Elongation factor 1-beta.